Consider the following 288-residue polypeptide: N-glycosylase/DNA lyase (288 aa).

8-oxoguanine is bound by residues Q35, S62, and W73. Residues 134–203 form a helix-hairpin-helix region; sequence NPLVLVERPS…VACASISSEM (70 aa). Catalysis depends on K160, which acts as the Schiff-base intermediate with DNA. Residues F164 and P189 each contribute to the 8-oxoguanine site. Residue D191 is part of the active site. D238 and W242 together coordinate 8-oxoguanine.

The protein belongs to the archaeal N-glycosylase/DNA lyase (AGOG) family.

It carries out the reaction 2'-deoxyribonucleotide-(2'-deoxyribose 5'-phosphate)-2'-deoxyribonucleotide-DNA = a 3'-end 2'-deoxyribonucleotide-(2,3-dehydro-2,3-deoxyribose 5'-phosphate)-DNA + a 5'-end 5'-phospho-2'-deoxyribonucleoside-DNA + H(+). DNA repair enzyme that is part of the base excision repair (BER) pathway; protects from oxidative damage by removing the major product of DNA oxidation, 8-oxoguanine (GO), from single- and double-stranded DNA substrates. The chain is N-glycosylase/DNA lyase from Aeropyrum pernix (strain ATCC 700893 / DSM 11879 / JCM 9820 / NBRC 100138 / K1).